The sequence spans 649 residues: 2-hydroxyacyl-CoA lyase 2 (649 aa).

The helical transmembrane segment at 2-21 (FHLIPFVVAFLLVFLTWFLI) threads the bilayer. Glu84 serves as a coordination point for thiamine diphosphate. The thiamine pyrophosphate binding stretch occupies residues 474–554 (DFVGSAAYIL…AIGVIGNDAC (81 aa)). The Mg(2+) site is built by Asp525 and Asn551.

Belongs to the TPP enzyme family. Mg(2+) serves as cofactor. It depends on thiamine diphosphate as a cofactor.

It is found in the endoplasmic reticulum membrane. The catalysed reaction is 2-hydroxyoctadecanoyl-CoA = heptadecanal + formyl-CoA. The enzyme catalyses (2R)-hydroxyhexadecanoyl-CoA = pentadecanal + formyl-CoA. In terms of biological role, endoplasmic reticulum 2-OH acyl-CoA lyase involved in the cleavage (C1 removal) reaction in the fatty acid alpha-oxydation in a thiamine pyrophosphate (TPP)-dependent manner. Involved in the phytosphingosine degradation pathway. The protein is 2-hydroxyacyl-CoA lyase 2 (ilvbl) of Xenopus laevis (African clawed frog).